Reading from the N-terminus, the 390-residue chain is Zinc transporter 7-B (390 aa).

Residues 1 to 37 (MLPLSIKDDEYKPPKFNLVRKVSGWIRSIFSDSTSRN) are Cytoplasmic-facing. The helical transmembrane segment at 38 to 58 (LFCFLCLNLSFAFVELFYGIW) threads the bilayer. The Lumenal segment spans residues 59–67 (SNSLGLISD). Residues 68-88 (SFHMFFDCTALLAGLAASVIS) traverse the membrane as a helical segment. Over 89–102 (RWKTNETFSYGYVR) the chain is Cytoplasmic. Residues 103-123 (AEVLAGFVNGLFLIFTAFFIF) traverse the membrane as a helical segment. The Lumenal portion of the chain corresponds to 124 to 140 (SEGIERALDTPEVHHER). Residues 141–161 (LLPVSIMGFLVNLIGIFVFQH) form a helical membrane-spanning segment. The segment at 161–226 (HGGGHGHSHE…GHDHSHKHGH (66 aa)) is his-rich loop. Topologically, residues 162-250 (GGGHGHSHES…KGSSKQILEG (89 aa)) are cytoplasmic. Residues 166 to 243 (GHSHESGHGH…DEPPEENKGS (78 aa)) are disordered. The segment covering 187-201 (GHSHSHGGGHGHSHG) has biased composition (basic residues). Composition is skewed to basic and acidic residues over residues 202-218 (GGHE…EHGH) and 232-242 (CHDEPPEENKG). The chain crosses the membrane as a helical span at residues 251 to 271 (VFLHIVADALGSVGVIISTIL). Residues 272-276 (MQQYG) lie on the Lumenal side of the membrane. Residues 277–297 (LMIADPICSMLIALLIFVSVI) traverse the membrane as a helical segment. At 298–390 (PLLKQSIGIL…LYVQIDLAAM (93 aa)) the chain is on the cytoplasmic side.

Belongs to the cation diffusion facilitator (CDF) transporter (TC 2.A.4) family. SLC30A subfamily. Homooligomer.

The protein resides in the golgi apparatus membrane. It is found in the cytoplasmic vesicle. It localises to the golgi apparatus. The protein localises to the trans-Golgi network. Its subcellular location is the sarcoplasmic reticulum. The protein resides in the mitochondrion. The enzyme catalyses Zn(2+)(in) = Zn(2+)(out). Its function is as follows. Zinc ion transporter mediating zinc entry from the cytosol into the lumen of organelles along the secretory pathway. By contributing to zinc ion homeostasis within the early secretory pathway, regulates the activation and folding of enzymes like alkaline phosphatases. The polypeptide is Zinc transporter 7-B (slc30a7-b) (Xenopus laevis (African clawed frog)).